Here is a 206-residue protein sequence, read N- to C-terminus: FMN-dependent NADH:quinone oxidoreductase (206 aa).

FMN-binding positions include 15 to 17 (SVS), 94 to 97 (MYNF), and 138 to 141 (TRGG).

The protein belongs to the azoreductase type 1 family. Homodimer. It depends on FMN as a cofactor.

The catalysed reaction is 2 a quinone + NADH + H(+) = 2 a 1,4-benzosemiquinone + NAD(+). The enzyme catalyses N,N-dimethyl-1,4-phenylenediamine + anthranilate + 2 NAD(+) = 2-(4-dimethylaminophenyl)diazenylbenzoate + 2 NADH + 2 H(+). Quinone reductase that provides resistance to thiol-specific stress caused by electrophilic quinones. Its function is as follows. Also exhibits azoreductase activity. Catalyzes the reductive cleavage of the azo bond in aromatic azo compounds to the corresponding amines. The polypeptide is FMN-dependent NADH:quinone oxidoreductase (Sinorhizobium medicae (strain WSM419) (Ensifer medicae)).